We begin with the raw amino-acid sequence, 748 residues long: MSFIDPYQHIIVEHQYSHKFTVVVLRATKVTKGAFGDMLDTPDPYVELFIATTPDSRKRTRHFNNDINPVWNEAFEFILDPNQGNVLEITLMDANYVMDETLGTATFPVSSMKVGEKKEVPFIFNQVTEMILEMSLEVCSSPDLRFSMALCDQEKAFRQQRKENIKENMRKLLGPKKSEGLYSTRDVPVVAILGSGGGFRAMVGFSGVMKALYESGILDCATYIAGLSGSTWYMSTLYSHPDFPEKGPQEINEELMKNVSHNPLLLLTPQKVKRYVESLWKKKSSGQPVTFTDIFGMLIGETLIHNRMHTTLSSLKEKVSSAQCPLPLFTCLHVKPDVSELMFADWVEFSPYEIGMAKYGTFMAPDLFGSKFFMGTVVKKYEENPLHFLMGVWGSAFSILFNRVLGVSGSHNKGSTMEEELENITAKHIVSNDSSDSDDESQEPKGTEGEDAEREYQNDHQASWVHRMLMALVSDSALFNTREGRAGKVHNFMLGLNLNTSYPLSPLRDFTQESFDDDELDAAVADPDEFERIYEPLDVKSKKIHVVDSGLTFNLPYPLILRPQRGVDLIISFDFSARPSDTSPPFKELLLAEKWAKMNKLPFPKIDPYVFDREGLKECYVFKPKNPDVEKDCPIIIHFVLANINFRKYKSPGVPRETKEEKEIADFDIFDDPESPFSTFNFQYPNQAFKRLHDLMYFNTLNNIDVIKDAMVESIEYRRQNPSRCSVSLSNVEARRFFNKEFLSKPTA.

Residues 1 to 178 form a phospholipid binding region; sequence MSFIDPYQHI…MRKLLGPKKS (178 aa). Ser2 is modified (phosphoserine). A C2 domain is found at 6 to 122; that stretch reads PYQHIIVEHQ…KVGEKKEVPF (117 aa). Ca(2+)-binding residues include Asp40, Thr41, Asp43, Asn65, Asp93, Ala94, and Asn95. The 602-residue stretch at 138-739 folds into the PLA2c domain; the sequence is VCSSPDLRFS…SNVEARRFFN (602 aa). Ser228 serves as the catalytic Nucleophile. At Thr268 the chain carries Phosphothreonine. A disordered region spans residues 428 to 458; the sequence is HIVSNDSSDSDDESQEPKGTEGEDAEREYQN. Phosphoserine is present on residues Ser434, Ser435, and Ser437. Positions 442–458 are enriched in basic and acidic residues; sequence QEPKGTEGEDAEREYQN. Ser505 is modified (phosphoserine; by MAPK). Ser514 carries the post-translational modification Phosphoserine. Lys540 is covalently cross-linked (Glycyl lysine isopeptide (Lys-Gly) (interchain with G-Cter in SUMO2)). Residue Asp548 is the Proton acceptor of the active site. A Glycyl lysine isopeptide (Lys-Gly) (interchain with G-Cter in SUMO2) cross-link involves residue Lys605. Ser726 and Ser728 each carry phosphoserine.

Interacts with KAT5. Post-translationally, phosphorylated at both Ser-505 and Ser-726 in response to mitogenic stimuli.

The protein resides in the cytoplasm. It localises to the golgi apparatus membrane. It is found in the nucleus envelope. The catalysed reaction is a 1,2-diacyl-sn-glycero-3-phosphocholine + H2O = a 1-acyl-sn-glycero-3-phosphocholine + a fatty acid + H(+). It catalyses the reaction a 1-O-alkyl-2-acyl-sn-glycero-3-phosphocholine + H2O = a 1-O-alkyl-sn-glycero-3-phosphocholine + a fatty acid + H(+). The enzyme catalyses a 1-acyl-sn-glycero-3-phosphocholine + H2O = sn-glycerol 3-phosphocholine + a fatty acid + H(+). It carries out the reaction 1-hexadecanoyl-2-(5Z,8Z,11Z,14Z-eicosatetraenoyl)-sn-glycero-3-phosphocholine + H2O = 1-hexadecanoyl-sn-glycero-3-phosphocholine + (5Z,8Z,11Z,14Z)-eicosatetraenoate + H(+). The catalysed reaction is 1,2-di-(5Z,8Z,11Z,14Z-eicosatetraenoyl)-sn-glycero-3-phosphocholine + H2O = 1-(5Z,8Z,11Z,14Z-eicosatetraenoyl)-sn-glycero-3-phosphocholine + (5Z,8Z,11Z,14Z)-eicosatetraenoate + H(+). It catalyses the reaction 1-octadecanoyl-2-(5Z,8Z,11Z,14Z-eicosatetraenoyl)-sn-glycero-3-phosphocholine + H2O = 1-octadecanoyl-sn-glycero-3-phosphocholine + (5Z,8Z,11Z,14Z)-eicosatetraenoate + H(+). The enzyme catalyses 1-hexadecanoyl-2-(9Z,12Z-octadecadienoyl)-sn-glycero-3-phosphocholine + H2O = (9Z,12Z)-octadecadienoate + 1-hexadecanoyl-sn-glycero-3-phosphocholine + H(+). It carries out the reaction 1-octadecanoyl-2-(9Z,12Z,15Z-octadecatrienoyl)-sn-glycero-3-phosphocholine + H2O = (9Z,12Z,15Z)-octadecatrienoate + 1-octadecanoyl-sn-glycero-3-phosphocholine + H(+). The catalysed reaction is 1-(5Z,8Z,11Z,14Z-eicosatetraenoyl)-2-hexadecanoyl-sn-glycero-3-phosphocholine + H2O = 1-(5Z,8Z,11Z,14Z-eicosatetraenoyl)-sn-glycero-3-phosphocholine + hexadecanoate + H(+). It catalyses the reaction 1-O-hexadecyl-2-(5Z,8Z,11Z,14Z)-eicosatetraenoyl-sn-glycero-3-phosphocholine + H2O = 1-O-hexadecyl-sn-glycero-3-phosphocholine + (5Z,8Z,11Z,14Z)-eicosatetraenoate + H(+). The enzyme catalyses 1,2-di-(9Z-octadecenoyl)-sn-glycero-3-phospho-(1'-sn-glycerol) + H2O = 1-(9Z-octadecenoyl)-sn-glycero-3-phospho-(1'-sn-glycerol) + (9Z)-octadecenoate + H(+). It carries out the reaction 1-octadecanoyl-2-(5Z,8Z,11Z,14Z-eicosatetraenoyl)-sn-glycero-3-phosphate + H2O = 1-octadecanoyl-sn-glycero-3-phosphate + (5Z,8Z,11Z,14Z)-eicosatetraenoate + H(+). The catalysed reaction is 1-hexadecanoyl-sn-glycero-3-phosphocholine + H2O = sn-glycerol 3-phosphocholine + hexadecanoate + H(+). It catalyses the reaction 2-(prostaglandin E2)-sn-glycero-3-phosphoethanolamine + H2O = sn-glycero-3-phosphoethanolamine + prostaglandin E2 + H(+). The enzyme catalyses 2-[(15S)-hydroxy-(5Z,8Z,11Z,13E)-eicosatetraenoyl]-sn-glycero-3-phosphocholine + H2O = (15S)-hydroxy-(5Z,8Z,11Z,13E)-eicosatetraenoate + sn-glycerol 3-phosphocholine + H(+). It carries out the reaction 2-[(15R)-hydroxy-(5Z,8Z,11Z,13E)-eicosatetraenoyl]-sn-glycero-3-phosphocholine + H2O = (15R)-hydroxy-(5Z,8Z,11Z,13E)-eicosatetraenoate + sn-glycerol 3-phosphocholine + H(+). The catalysed reaction is 2-(prostaglandin E2)-sn-glycero-3-phosphocholine + H2O = prostaglandin E2 + sn-glycerol 3-phosphocholine + H(+). It catalyses the reaction 2-[(11R)-hydroxy-(5Z,8Z,12E,14Z)-eicosatetraenoyl]-sn-glycero-3-phosphocholine + H2O = (11R)-hydroxy-(5Z,8Z,12E,14Z)-eicosatetraenoate + sn-glycerol 3-phosphocholine + H(+). The enzyme catalyses 1-(5Z,8Z,11Z,14Z-eicosatetraenoyl)-2-O-hexadecyl-sn-glycero-3-phosphocholine + H2O = 2-O-hexadecyl-sn-glycero-3-phosphocholine + (5Z,8Z,11Z,14Z)-eicosatetraenoate + H(+). It carries out the reaction 1-octadecanoyl-2-(5Z,8Z,11Z,14Z-eicosatetraenoyl)-sn-glycero-3-phosphocholine + glycerol = 1-(5Z,8Z,11Z,14Z-eicosatetraenoyl)-glycerol + 1-octadecanoyl-sn-glycero-3-phosphocholine. The catalysed reaction is 1-octadecanoyl-2-(9Z,12Z,15Z-octadecatrienoyl)-sn-glycero-3-phosphocholine + glycerol = 1-(9Z,12Z,15Z-octadecatrienoyl)-glycerol + 1-octadecanoyl-sn-glycero-3-phosphocholine. The protein operates within membrane lipid metabolism; glycerophospholipid metabolism. It participates in lipid metabolism; arachidonate metabolism. Its pathway is lipid metabolism; prostaglandin biosynthesis. It functions in the pathway lipid metabolism; leukotriene B4 biosynthesis. With respect to regulation, activated by cytosolic calcium, which is necessary for binding to membrane lipids. Activated by phosphorylation in response to mitogenic stimuli. Has primarily calcium-dependent phospholipase and lysophospholipase activities, with a major role in membrane lipid remodeling and biosynthesis of lipid mediators of the inflammatory response. Plays an important role in embryo implantation and parturition through its ability to trigger prostanoid production. Preferentially hydrolyzes the ester bond of the fatty acyl group attached at sn-2 position of phospholipids (phospholipase A2 activity). Selectively hydrolyzes sn-2 arachidonoyl group from membrane phospholipids, providing the precursor for eicosanoid biosynthesis via the cyclooxygenase pathway. In an alternative pathway of eicosanoid biosynthesis, hydrolyzes sn-2 fatty acyl chain of eicosanoid lysophopholipids to release free bioactive eicosanoids. Hydrolyzes the ester bond of the fatty acyl group attached at sn-1 position of phospholipids (phospholipase A1 activity) only if an ether linkage rather than an ester linkage is present at the sn-2 position. This hydrolysis is not stereospecific. Has calcium-independent phospholipase A2 and lysophospholipase activities in the presence of phosphoinositides. Has O-acyltransferase activity. Catalyzes the transfer of fatty acyl chains from phospholipids to a primary hydroxyl group of glycerol (sn-1 or sn-3), potentially contributing to monoacylglycerol synthesis. This chain is Cytosolic phospholipase A2 (PLA2G4A), found in Oryctolagus cuniculus (Rabbit).